Consider the following 78-residue polypeptide: Protein SlyX homolog (78 aa).

The protein belongs to the SlyX family.

The protein is Protein SlyX homolog of Xylella fastidiosa (strain M23).